The primary structure comprises 351 residues: Thiamine-phosphate synthase (351 aa).

The segment at 1–129 (MVEPYSQKEQ…AKACKQMRYQ (129 aa)) is unknown. Residues 65–85 (LRAARDTPGDPGTELTHPQEE) form a disordered region. The interval 130 to 351 (VYTLESNLMG…SQLNRIKPEL (222 aa)) is thiamine-phosphate synthase. Residues 177 to 181 (QYRDK) and asparagine 209 contribute to the 4-amino-2-methyl-5-(diphosphooxymethyl)pyrimidine site. The Mg(2+) site is built by aspartate 210 and aspartate 229. Serine 248 contacts 4-amino-2-methyl-5-(diphosphooxymethyl)pyrimidine. 2-[(2R,5Z)-2-carboxy-4-methylthiazol-5(2H)-ylidene]ethyl phosphate is bound at residue 274 to 276 (TPT). A 4-amino-2-methyl-5-(diphosphooxymethyl)pyrimidine-binding site is contributed by lysine 277. Glycine 304 lines the 2-[(2R,5Z)-2-carboxy-4-methylthiazol-5(2H)-ylidene]ethyl phosphate pocket.

This sequence belongs to the thiamine-phosphate synthase family. It depends on Mg(2+) as a cofactor.

It carries out the reaction 2-[(2R,5Z)-2-carboxy-4-methylthiazol-5(2H)-ylidene]ethyl phosphate + 4-amino-2-methyl-5-(diphosphooxymethyl)pyrimidine + 2 H(+) = thiamine phosphate + CO2 + diphosphate. The enzyme catalyses 2-(2-carboxy-4-methylthiazol-5-yl)ethyl phosphate + 4-amino-2-methyl-5-(diphosphooxymethyl)pyrimidine + 2 H(+) = thiamine phosphate + CO2 + diphosphate. The catalysed reaction is 4-methyl-5-(2-phosphooxyethyl)-thiazole + 4-amino-2-methyl-5-(diphosphooxymethyl)pyrimidine + H(+) = thiamine phosphate + diphosphate. The protein operates within cofactor biosynthesis; thiamine diphosphate biosynthesis; thiamine phosphate from 4-amino-2-methyl-5-diphosphomethylpyrimidine and 4-methyl-5-(2-phosphoethyl)-thiazole: step 1/1. In terms of biological role, condenses 4-methyl-5-(beta-hydroxyethyl)thiazole monophosphate (THZ-P) and 2-methyl-4-amino-5-hydroxymethyl pyrimidine pyrophosphate (HMP-PP) to form thiamine monophosphate (TMP). The chain is Thiamine-phosphate synthase from Nostoc punctiforme (strain ATCC 29133 / PCC 73102).